The sequence spans 318 residues: MDIRAPEQQYNPYRVYTREQWARLRDDTPMTLEPGEFDRLRSLHDRLDLQEVEDIYLPLSRLLSIYVDAMQRLYYAERQFLNIRDRKMPYIIGVAGSVAVGKSTTARVLQALLARWSPRPKVDLITTDGFLYPNAVLDRQGIMQKKGFPESYDLPLLLGFLSDIKAGRRHVRAPVYSHLTYDIVPNQWVEIDQPDILIVEGVNVLQTGKLPRDGKAVPVVSDFFDFSVYIDADEAALRRWYIKRFLALRDTAFTNPKSYFNRYALLSDEEATATAIAIWERTNLANLEDNILPTRPRATLILKKGPDHVVESVALRRL.

ATP is bound at residue 96–103 (GSVAVGKS).

The protein belongs to the prokaryotic pantothenate kinase family.

The protein localises to the cytoplasm. The catalysed reaction is (R)-pantothenate + ATP = (R)-4'-phosphopantothenate + ADP + H(+). It functions in the pathway cofactor biosynthesis; coenzyme A biosynthesis; CoA from (R)-pantothenate: step 1/5. This Bradyrhizobium diazoefficiens (strain JCM 10833 / BCRC 13528 / IAM 13628 / NBRC 14792 / USDA 110) protein is Pantothenate kinase.